We begin with the raw amino-acid sequence, 374 residues long: MEKERLIAIRRDLHRIPEIGFQEYKTQQYLLNLLNQYPEERIEIETWRTGIFVKVNGTAPEKMLAYRADIDALSIEEQTGLPFASEHPGFMHACGHDMHMTIALGIIDHFVHHPVKHDLLFLFQPAEEGPGGAEPMLESDVLKKWTPDLITALHIAPELPVGTISTKSGLLFANTSELVIDLEGKGGHAAYPHTADDMVVAASTLVTQLQTVISRNTDPLDSAVITVGTITGGTAQNIIAEHAHLEGTIRTLSEESMRMVKKRIEELVKGIEIGFRCKGKVTYPSVYHQVYNTSGLTEEFMQFVSDHQLADVRTAKEAMTGEDFGYMLKKYPGFMFWLGADSSHGLHHAKLNPDEDAMETAVNVMVGYFSKYAN.

Residue D69 is part of the active site. E128 acts as the Proton acceptor in catalysis.

The protein belongs to the peptidase M20A family. N-acetyldiaminopimelate deacetylase subfamily.

The enzyme catalyses N-acetyl-(2S,6S)-2,6-diaminopimelate + H2O = (2S,6S)-2,6-diaminopimelate + acetate. Its pathway is amino-acid biosynthesis; L-lysine biosynthesis via DAP pathway; LL-2,6-diaminopimelate from (S)-tetrahydrodipicolinate (acetylase route): step 3/3. In terms of biological role, catalyzes the conversion of N-acetyl-diaminopimelate to diaminopimelate and acetate. This Bacillus velezensis (strain DSM 23117 / BGSC 10A6 / LMG 26770 / FZB42) (Bacillus amyloliquefaciens subsp. plantarum) protein is N-acetyldiaminopimelate deacetylase.